The following is a 173-amino-acid chain: Transcription factor E (173 aa).

Positions 9–92 (NNPATRAYIH…LWQLRIDLLY (84 aa)) constitute an HTH TFE/IIEalpha-type domain.

This sequence belongs to the TFE family. Monomer. Interaction with RNA polymerase subunits RpoF and RpoE is necessary for Tfe stimulatory transcription activity. Able to interact with Tbp and RNA polymerase in the absence of DNA promoter. Interacts both with the preinitiation and elongation complexes.

In terms of biological role, transcription factor that plays a role in the activation of archaeal genes transcribed by RNA polymerase. Facilitates transcription initiation by enhancing TATA-box recognition by TATA-box-binding protein (Tbp), and transcription factor B (Tfb) and RNA polymerase recruitment. Not absolutely required for transcription in vitro, but particularly important in cases where Tbp or Tfb function is not optimal. It dynamically alters the nucleic acid-binding properties of RNA polymerases by stabilizing the initiation complex and destabilizing elongation complexes. Seems to translocate with the RNA polymerase following initiation and acts by binding to the non template strand of the transcription bubble in elongation complexes. The sequence is that of Transcription factor E from Methanoregula boonei (strain DSM 21154 / JCM 14090 / 6A8).